Consider the following 296-residue polypeptide: 4-hydroxybenzoate octaprenyltransferase (296 aa).

8 helical membrane passes run Pro-28 to Gly-48, Leu-52 to Ile-72, Ala-102 to Ala-122, Tyr-146 to Ala-166, Gly-169 to Tyr-189, Val-219 to Phe-239, Leu-241 to Trp-261, and Phe-275 to Phe-295.

It belongs to the UbiA prenyltransferase family. Mg(2+) is required as a cofactor.

It is found in the cell inner membrane. It carries out the reaction all-trans-octaprenyl diphosphate + 4-hydroxybenzoate = 4-hydroxy-3-(all-trans-octaprenyl)benzoate + diphosphate. Its pathway is cofactor biosynthesis; ubiquinone biosynthesis. Catalyzes the prenylation of para-hydroxybenzoate (PHB) with an all-trans polyprenyl group. Mediates the second step in the final reaction sequence of ubiquinone-8 (UQ-8) biosynthesis, which is the condensation of the polyisoprenoid side chain with PHB, generating the first membrane-bound Q intermediate 3-octaprenyl-4-hydroxybenzoate. The protein is 4-hydroxybenzoate octaprenyltransferase of Pseudomonas fluorescens (strain SBW25).